Here is a 408-residue protein sequence, read N- to C-terminus: Cytochrome bc1 complex Rieske iron-sulfur subunit (408 aa).

3 consecutive transmembrane segments (helical) span residues 56–76 (VGIW…TYIF), 98–118 (MLGI…VLYV), and 166–186 (LLAG…GGMI). The Rieske domain occupies 293–390 (HGPRNAVMLI…ITVDEEGYLI (98 aa)). Residues cysteine 333, histidine 335, cysteine 352, and histidine 355 each coordinate [2Fe-2S] cluster. A disulfide bond links cysteine 338 and cysteine 354.

This sequence belongs to the Rieske iron-sulfur protein family. In terms of assembly, the cytochrome bc1 complex is composed of a cytochrome b (QcrB), the Rieske iron-sulfur protein (QcrA) and a diheme cytochrome c (QcrC) subunit. The bc1 complex forms a supercomplex with cytochrome c oxidase (cytochrome aa3). Requires [2Fe-2S] cluster as cofactor.

Its subcellular location is the cell membrane. Iron-sulfur subunit of the cytochrome bc1 complex, an essential component of the respiratory electron transport chain required for ATP synthesis. The bc1 complex catalyzes the oxidation of menaquinol and the reduction of cytochrome c in the respiratory chain. The bc1 complex operates through a Q-cycle mechanism that couples electron transfer to generation of the proton gradient that drives ATP synthesis. The chain is Cytochrome bc1 complex Rieske iron-sulfur subunit (qcrA) from Corynebacterium efficiens (strain DSM 44549 / YS-314 / AJ 12310 / JCM 11189 / NBRC 100395).